A 317-amino-acid polypeptide reads, in one-letter code: tRNA dimethylallyltransferase (317 aa).

14-21 is an ATP binding site; sequence GPTASGKT. Position 16–21 (16–21) interacts with substrate; that stretch reads TASGKT. Interaction with substrate tRNA regions lie at residues 39-42 and 163-167; these read DSAL and QRIQR.

This sequence belongs to the IPP transferase family. Monomer. The cofactor is Mg(2+).

It carries out the reaction adenosine(37) in tRNA + dimethylallyl diphosphate = N(6)-dimethylallyladenosine(37) in tRNA + diphosphate. Functionally, catalyzes the transfer of a dimethylallyl group onto the adenine at position 37 in tRNAs that read codons beginning with uridine, leading to the formation of N6-(dimethylallyl)adenosine (i(6)A). The sequence is that of tRNA dimethylallyltransferase from Stenotrophomonas maltophilia (strain K279a).